The chain runs to 452 residues: UDP-N-acetylmuramate--L-alanine ligase (452 aa).

119–125 contributes to the ATP binding site; the sequence is GAHGKTS.

This sequence belongs to the MurCDEF family.

It is found in the cytoplasm. It catalyses the reaction UDP-N-acetyl-alpha-D-muramate + L-alanine + ATP = UDP-N-acetyl-alpha-D-muramoyl-L-alanine + ADP + phosphate + H(+). It functions in the pathway cell wall biogenesis; peptidoglycan biosynthesis. Cell wall formation. The protein is UDP-N-acetylmuramate--L-alanine ligase of Streptococcus mutans serotype c (strain ATCC 700610 / UA159).